The following is a 190-amino-acid chain: Potassium-transporting ATPase KdpC subunit (190 aa).

Residues 11-31 (LIVLMSLITGVAYPLVVTGVA) traverse the membrane as a helical segment.

The protein belongs to the KdpC family. The system is composed of three essential subunits: KdpA, KdpB and KdpC.

The protein resides in the cell inner membrane. Its function is as follows. Part of the high-affinity ATP-driven potassium transport (or Kdp) system, which catalyzes the hydrolysis of ATP coupled with the electrogenic transport of potassium into the cytoplasm. This subunit acts as a catalytic chaperone that increases the ATP-binding affinity of the ATP-hydrolyzing subunit KdpB by the formation of a transient KdpB/KdpC/ATP ternary complex. The sequence is that of Potassium-transporting ATPase KdpC subunit from Pseudomonas savastanoi pv. phaseolicola (strain 1448A / Race 6) (Pseudomonas syringae pv. phaseolicola (strain 1448A / Race 6)).